The primary structure comprises 628 residues: Chaperone protein DnaK (628 aa).

Position 174 is a phosphothreonine; by autocatalysis (T174). The segment at 589–628 (AAGGAGPDMGAGAGPDMGAGASNGSAPYGDDVVDGDYKEV) is disordered. The segment covering 591–605 (GGAGPDMGAGAGPDM) has biased composition (gly residues).

Belongs to the heat shock protein 70 family.

Its function is as follows. Acts as a chaperone. This chain is Chaperone protein DnaK, found in Lachnospira eligens (strain ATCC 27750 / DSM 3376 / VPI C15-48 / C15-B4) (Eubacterium eligens).